Here is a 384-residue protein sequence, read N- to C-terminus: Neuropeptide Y receptor type 2 (384 aa).

The Extracellular segment spans residues 1–54; the sequence is MKMGPLGAEADENQTVEEMKVDQFGPGHTTLPGELAPDSEPELIDSTKLIEVQV. A glycan (N-linked (GlcNAc...) asparagine) is linked at N13. Residues 55–75 traverse the membrane as a helical segment; it reads VLILAYCSIILLGVIGNSLVI. The Cytoplasmic portion of the chain corresponds to 76-89; sequence HVVIKFKSMRTVTN. Residues 90–110 traverse the membrane as a helical segment; that stretch reads FFIANLAVADLLVNTLCLPFT. At 111–127 the chain is on the extracellular side; it reads LTYTLMGEWKMGPVLCH. Cysteines 126 and 206 form a disulfide. A helical membrane pass occupies residues 128 to 148; sequence LVPYAQGLAVQVSTITLTVIA. At 149–168 the chain is on the cytoplasmic side; it reads LDRHRCIVYHLESKISKQIS. Residues 169–189 form a helical membrane-spanning segment; it reads FLIIGLAWGVSALLASPLAIF. Topologically, residues 190 to 219 are extracellular; sequence REYSLIEIIPDFEIVACTEKWPGEEKGIYG. The helical transmembrane segment at 220–240 threads the bilayer; sequence TIYSLSSLLILYVLPLGIISF. At 241–271 the chain is on the cytoplasmic side; the sequence is SYTRIWSKLKNHVSPGAAHDHYHQRRQKTTK. The helical transmembrane segment at 272–292 threads the bilayer; that stretch reads MLVCVVVVFAVSWLPLHAFQL. The Extracellular portion of the chain corresponds to 293-307; that stretch reads AVDIDSHVLDLKEYK. A helical transmembrane segment spans residues 308-328; the sequence is LIFTVFHIIAMCSTFANPLLY. Residues 329 to 384 are Cytoplasmic-facing; that stretch reads GWMNSNYRKAFLSAFRCEQRLDAIHSEVSVTFKAKKHLQVTKNNGPNDSFTETTNV. C345 is lipidated: S-palmitoyl cysteine.

Belongs to the G-protein coupled receptor 1 family.

It is found in the cell membrane. Functionally, receptor for neuropeptide Y and peptide YY. This is Neuropeptide Y receptor type 2 (NPY2R) from Bos taurus (Bovine).